We begin with the raw amino-acid sequence, 386 residues long: Innexin inx4 (386 aa).

At 1–21 (MLEFVRPLQSILQIKQVNSTD) the chain is on the cytoplasmic side. A helical transmembrane segment spans residues 22 to 42 (LVWRLHCRVTVFLLLLASLLL). The Extracellular portion of the chain corresponds to 43-111 (SARQYFGNPI…ESERSYQKYY (69 aa)). The chain crosses the membrane as a helical span at residues 112-132 (QWVVFILALQACMFSVPNFLW). Over 133-187 (KAWEAGRLQSLCDGLTTPIVPDHWEKTRKKQLITYLSADFPRLHRTYLLRYCFCT) the chain is Cytoplasmic. A helical transmembrane segment spans residues 188–208 (LLNFCNVLLNIFLVNVIFSGF). At 209 to 272 (WSNYHPAVKA…LNVVNEKIFA (64 aa)) the chain is on the extracellular side. The chain crosses the membrane as a helical span at residues 273-293 (FIWLWFLGLLVISMLNLLFWI). Residues 294–386 (VVLCSKGFRL…DPEGYDEEGV (93 aa)) are Cytoplasmic-facing. The interval 358–386 (HNGHKTFRMPKGGEPDFYTDPEGYDEEGV) is disordered. Positions 374–386 (FYTDPEGYDEEGV) are enriched in acidic residues.

It belongs to the pannexin family.

The protein resides in the cell membrane. It is found in the cell junction. The protein localises to the gap junction. Its function is as follows. Structural component of gap junctions. Required for normal development of ovary. Required for normal egg production after blood meal. Required for normal development of testis. Functionally, (Microbial infection) Modulates the development of Plasmodium falciparum oocysts. The protein is Innexin inx4 of Anopheles gambiae (African malaria mosquito).